The following is a 638-amino-acid chain: Leucine-rich repeat-containing protein 63 (638 aa).

Disordered regions lie at residues 220–241 and 306–325; these read VPST…PSAA and TTAA…TVQR. LRR repeat units follow at residues 389–412, 413–435, 437–458, 460–481, 482–504, and 532–556; these read AFQL…ILYL, QNLQ…IHLL, YLRI…LFCL, YLEE…IQKL, RSLE…ILKL, and LTQI…VRKS.

In Mus musculus (Mouse), this protein is Leucine-rich repeat-containing protein 63.